A 256-amino-acid chain; its full sequence is Gene 18 protein (256 aa).

Belongs to the herpesviridae UL79 family.

The polypeptide is Gene 18 protein (18) (Saimiriine herpesvirus 2 (strain 11) (SaHV-2)).